Reading from the N-terminus, the 1551-residue chain is Pentafunctional AROM polypeptide 2 (1551 aa).

Positions 1–379 are 3-dehydroquinate synthase; it reads MSIEKVSILG…YESKAHQIFK (379 aa). NAD(+) is bound by residues 42-44, 80-83, 111-113, and aspartate 116; these read DTN, ENHK, and GGV. Arginine 127 contacts 7-phospho-2-dehydro-3-deoxy-D-arabino-heptonate. 136 to 137 is a binding site for NAD(+); sequence TT. Residues aspartate 143 and lysine 149 each coordinate 7-phospho-2-dehydro-3-deoxy-D-arabino-heptonate. Lysine 158 is an NAD(+) binding site. A 7-phospho-2-dehydro-3-deoxy-D-arabino-heptonate-binding site is contributed by asparagine 159. NAD(+) contacts are provided by residues 176–179 and asparagine 187; that span reads FLQT. Glutamate 191 contributes to the Zn(2+) binding site. Residues 191 to 194 and lysine 243 each bind 7-phospho-2-dehydro-3-deoxy-D-arabino-heptonate; that span reads EVVK. The Proton acceptor; for 3-dehydroquinate synthase activity role is filled by glutamate 253. 7-phospho-2-dehydro-3-deoxy-D-arabino-heptonate-binding positions include 257–261 and histidine 264; that span reads RNLLN. Histidine 264 serves as a coordination point for Zn(2+). Residue histidine 268 is the Proton acceptor; for 3-dehydroquinate synthase activity of the active site. 7-phospho-2-dehydro-3-deoxy-D-arabino-heptonate is bound by residues histidine 280 and lysine 351. Histidine 280 serves as a coordination point for Zn(2+). Positions 392-835 are EPSP synthase; the sequence is VHPFANRHPE…WDVLHSKFNA (444 aa). A shikimate kinase region spans residues 854–1044; sequence DRSIVIIGMR…LPATRSTFVT (191 aa). Residue 861–868 coordinates ATP; the sequence is GMRAAGKT. The 3-dehydroquinase stretch occupies residues 1045 to 1258; it reads LTYPDLRKVP…IGVGQLSLKE (214 aa). Histidine 1162 (proton acceptor; for 3-dehydroquinate dehydratase activity) is an active-site residue. Lysine 1191 acts as the Schiff-base intermediate with substrate; for 3-dehydroquinate dehydratase activity in catalysis. The segment at 1271-1551 is shikimate dehydrogenase; sequence EKEFWVVGFP…KVIHSAVLNE (281 aa).

The protein in the N-terminal section; belongs to the sugar phosphate cyclases superfamily. Dehydroquinate synthase family. In the 2nd section; belongs to the EPSP synthase family. This sequence in the 3rd section; belongs to the shikimate kinase family. It in the 4th section; belongs to the type-I 3-dehydroquinase family. The protein in the C-terminal section; belongs to the shikimate dehydrogenase family. Homodimer. It depends on Zn(2+) as a cofactor.

It is found in the cytoplasm. The enzyme catalyses 7-phospho-2-dehydro-3-deoxy-D-arabino-heptonate = 3-dehydroquinate + phosphate. The catalysed reaction is 3-dehydroquinate = 3-dehydroshikimate + H2O. It catalyses the reaction shikimate + NADP(+) = 3-dehydroshikimate + NADPH + H(+). It carries out the reaction shikimate + ATP = 3-phosphoshikimate + ADP + H(+). The enzyme catalyses 3-phosphoshikimate + phosphoenolpyruvate = 5-O-(1-carboxyvinyl)-3-phosphoshikimate + phosphate. Its pathway is metabolic intermediate biosynthesis; chorismate biosynthesis; chorismate from D-erythrose 4-phosphate and phosphoenolpyruvate: step 2/7. It participates in metabolic intermediate biosynthesis; chorismate biosynthesis; chorismate from D-erythrose 4-phosphate and phosphoenolpyruvate: step 3/7. It functions in the pathway metabolic intermediate biosynthesis; chorismate biosynthesis; chorismate from D-erythrose 4-phosphate and phosphoenolpyruvate: step 4/7. The protein operates within metabolic intermediate biosynthesis; chorismate biosynthesis; chorismate from D-erythrose 4-phosphate and phosphoenolpyruvate: step 5/7. Its pathway is metabolic intermediate biosynthesis; chorismate biosynthesis; chorismate from D-erythrose 4-phosphate and phosphoenolpyruvate: step 6/7. Its function is as follows. The AROM polypeptide catalyzes 5 consecutive enzymatic reactions in prechorismate polyaromatic amino acid biosynthesis. The polypeptide is Pentafunctional AROM polypeptide 2 (Lodderomyces elongisporus (strain ATCC 11503 / CBS 2605 / JCM 1781 / NBRC 1676 / NRRL YB-4239) (Yeast)).